Consider the following 305-residue polypeptide: UDP-3-O-acyl-N-acetylglucosamine deacetylase (305 aa).

The Zn(2+) site is built by His-79, His-238, and Asp-242. The Proton donor role is filled by His-265.

This sequence belongs to the LpxC family. Zn(2+) is required as a cofactor.

The enzyme catalyses a UDP-3-O-[(3R)-3-hydroxyacyl]-N-acetyl-alpha-D-glucosamine + H2O = a UDP-3-O-[(3R)-3-hydroxyacyl]-alpha-D-glucosamine + acetate. It functions in the pathway glycolipid biosynthesis; lipid IV(A) biosynthesis; lipid IV(A) from (3R)-3-hydroxytetradecanoyl-[acyl-carrier-protein] and UDP-N-acetyl-alpha-D-glucosamine: step 2/6. Its function is as follows. Catalyzes the hydrolysis of UDP-3-O-myristoyl-N-acetylglucosamine to form UDP-3-O-myristoylglucosamine and acetate, the committed step in lipid A biosynthesis. The protein is UDP-3-O-acyl-N-acetylglucosamine deacetylase of Mannheimia succiniciproducens (strain KCTC 0769BP / MBEL55E).